The primary structure comprises 225 residues: Phosphatidylserine decarboxylase proenzyme (225 aa).

Serine 195 functions as the Schiff-base intermediate with substrate; via pyruvic acid in the catalytic mechanism. Serine 195 is subject to Pyruvic acid (Ser); by autocatalysis.

The protein belongs to the phosphatidylserine decarboxylase family. PSD-A subfamily. In terms of assembly, heterodimer of a large membrane-associated beta subunit and a small pyruvoyl-containing alpha subunit. Requires pyruvate as cofactor. Is synthesized initially as an inactive proenzyme. Formation of the active enzyme involves a self-maturation process in which the active site pyruvoyl group is generated from an internal serine residue via an autocatalytic post-translational modification. Two non-identical subunits are generated from the proenzyme in this reaction, and the pyruvate is formed at the N-terminus of the alpha chain, which is derived from the carboxyl end of the proenzyme. The post-translation cleavage follows an unusual pathway, termed non-hydrolytic serinolysis, in which the side chain hydroxyl group of the serine supplies its oxygen atom to form the C-terminus of the beta chain, while the remainder of the serine residue undergoes an oxidative deamination to produce ammonia and the pyruvoyl prosthetic group on the alpha chain.

It localises to the cell membrane. It catalyses the reaction a 1,2-diacyl-sn-glycero-3-phospho-L-serine + H(+) = a 1,2-diacyl-sn-glycero-3-phosphoethanolamine + CO2. Its pathway is phospholipid metabolism; phosphatidylethanolamine biosynthesis; phosphatidylethanolamine from CDP-diacylglycerol: step 2/2. Functionally, catalyzes the formation of phosphatidylethanolamine (PtdEtn) from phosphatidylserine (PtdSer). The polypeptide is Phosphatidylserine decarboxylase proenzyme (Gluconacetobacter diazotrophicus (strain ATCC 49037 / DSM 5601 / CCUG 37298 / CIP 103539 / LMG 7603 / PAl5)).